The following is a 183-amino-acid chain: Ubiquitin-conjugating enzyme E2-21 kDa (183 aa).

Residues 17-179 (TCMSRIVKEY…VKYFLAERER (163 aa)) enclose the UBC core domain. Residue cysteine 115 is the Glycyl thioester intermediate of the active site.

The protein belongs to the ubiquitin-conjugating enzyme family.

The protein resides in the peroxisome. The catalysed reaction is S-ubiquitinyl-[E1 ubiquitin-activating enzyme]-L-cysteine + [E2 ubiquitin-conjugating enzyme]-L-cysteine = [E1 ubiquitin-activating enzyme]-L-cysteine + S-ubiquitinyl-[E2 ubiquitin-conjugating enzyme]-L-cysteine.. The protein operates within protein modification; protein ubiquitination. Functionally, catalyzes the covalent attachment of ubiquitin to other proteins. Essential for peroxisome biogenesis. Required for UBC4-independent ubiquitination of PEX5. The sequence is that of Ubiquitin-conjugating enzyme E2-21 kDa (PEX4) from Saccharomyces cerevisiae (strain ATCC 204508 / S288c) (Baker's yeast).